A 186-amino-acid chain; its full sequence is Ribosome-recycling factor (186 aa).

Belongs to the RRF family.

The protein resides in the cytoplasm. Responsible for the release of ribosomes from messenger RNA at the termination of protein biosynthesis. May increase the efficiency of translation by recycling ribosomes from one round of translation to another. In Paraburkholderia xenovorans (strain LB400), this protein is Ribosome-recycling factor.